The chain runs to 386 residues: Phosphoglycerate kinase (386 aa).

Substrate is bound by residues 21–23, Arg-36, 59–62, Arg-113, and Arg-146; these read DLN and HLGR. Residues Lys-197, Glu-314, and 340-343 contribute to the ATP site; that span reads GGDT.

Belongs to the phosphoglycerate kinase family. In terms of assembly, monomer.

Its subcellular location is the cytoplasm. The enzyme catalyses (2R)-3-phosphoglycerate + ATP = (2R)-3-phospho-glyceroyl phosphate + ADP. It functions in the pathway carbohydrate degradation; glycolysis; pyruvate from D-glyceraldehyde 3-phosphate: step 2/5. This chain is Phosphoglycerate kinase, found in Azotobacter vinelandii (strain DJ / ATCC BAA-1303).